Here is a 62-residue protein sequence, read N- to C-terminus: uncharacterized protein (62 aa).

The interval 38–62 is disordered; it reads VKSESDTADSKRSAEAKADEAPAKM.

This is an uncharacterized protein from Schizosaccharomyces pombe (strain 972 / ATCC 24843) (Fission yeast).